We begin with the raw amino-acid sequence, 255 residues long: MKRLNKLVLGISFLFLVISITAGCGMGKEAEIKKSFEKTMSMYPIKNLEDLYDKEGYRDDQFDKNDKGTWIVNSQMAIQNKGEPMKSKGMVLYMNRNTRTTNGYYYVNVIKGEDKGKHQDNEKRYPVKMVDNKIILTKEIKDENIKIEIENFKFFVQYGNFKDLENYKDGDISYNPEVPSYSAKYQLTNDDYNVKQLRKRYDIPTNKAPKLLLKGTGNLKGSSVGYKDIEFTFVEKKEENIYFSDGLIFKPSEDK.

The first 23 residues, 1-23 (MKRLNKLVLGISFLFLVISITAG), serve as a signal peptide directing secretion. Cys-24 is lipidated: N-palmitoyl cysteine. Residue Cys-24 is the site of S-diacylglycerol cysteine attachment.

It belongs to the staphylococcal tandem lipoprotein family.

The protein localises to the cell membrane. This is an uncharacterized protein from Staphylococcus aureus (strain N315).